The primary structure comprises 342 residues: Anthranilate phosphoribosyltransferase (342 aa).

5-phospho-alpha-D-ribose 1-diphosphate contacts are provided by residues Gly-83, 86-87, Thr-91, 93-96, 111-119, and Ser-123; these read GD, NIST, and KHGGRSVSS. Position 83 (Gly-83) interacts with anthranilate. Ser-95 contacts Mg(2+). Arg-169 lines the anthranilate pocket. Asp-228 and Glu-229 together coordinate Mg(2+).

It belongs to the anthranilate phosphoribosyltransferase family. As to quaternary structure, homodimer. It depends on Mg(2+) as a cofactor.

It catalyses the reaction N-(5-phospho-beta-D-ribosyl)anthranilate + diphosphate = 5-phospho-alpha-D-ribose 1-diphosphate + anthranilate. It functions in the pathway amino-acid biosynthesis; L-tryptophan biosynthesis; L-tryptophan from chorismate: step 2/5. Functionally, catalyzes the transfer of the phosphoribosyl group of 5-phosphorylribose-1-pyrophosphate (PRPP) to anthranilate to yield N-(5'-phosphoribosyl)-anthranilate (PRA). This chain is Anthranilate phosphoribosyltransferase, found in Chromobacterium violaceum (strain ATCC 12472 / DSM 30191 / JCM 1249 / CCUG 213 / NBRC 12614 / NCIMB 9131 / NCTC 9757 / MK).